The primary structure comprises 239 residues: Thymidylate kinase (239 aa).

10–17 (GINGVGKS) is an ATP binding site.

Belongs to the thymidylate kinase family.

The enzyme catalyses dTMP + ATP = dTDP + ADP. The protein operates within pyrimidine metabolism; dTTP biosynthesis. Catalyzes the conversion of dTMP to dTDP. This African swine fever virus (isolate Warthog/Namibia/Wart80/1980) (ASFV) protein is Thymidylate kinase (TMK).